Consider the following 367-residue polypeptide: Dimethyladenosine transferase 1, mitochondrial (367 aa).

The transit peptide at 1–16 (MASASRLPPLPALRDF) directs the protein to the mitochondrion. S-adenosyl-L-methionine contacts are provided by residues 30–33 (QNYL), Asn-31, Leu-33, Gly-58, Glu-80, Asp-106, and Asn-141.

This sequence belongs to the class I-like SAM-binding methyltransferase superfamily. rRNA adenine N(6)-methyltransferase family. KsgA subfamily.

The protein resides in the mitochondrion. Functionally, probable S-adenosyl-L-methionine-dependent methyltransferase which specifically dimethylates mitochondrial 12S rRNA at the conserved stem loop. Also required for basal transcription of mitochondrial DNA. Stimulates transcription independently of the methyltransferase activity. The polypeptide is Dimethyladenosine transferase 1, mitochondrial (tfbm-1) (Caenorhabditis elegans).